The following is a 375-amino-acid chain: Cinnamyl alcohol dehydrogenase 3 (375 aa).

Residue cysteine 44 participates in Zn(2+) binding. An NADP(+)-binding site is contributed by serine 46. Residues histidine 66, glutamate 67, cysteine 97, cysteine 100, cysteine 103, cysteine 111, and cysteine 160 each coordinate Zn(2+). NADP(+)-binding positions include threonine 164, 186 to 191 (GLGGLG), 209 to 214 (SRSSEK), threonine 249, glycine 273, and 296 to 298 (SQI).

It belongs to the zinc-containing alcohol dehydrogenase family. As to quaternary structure, homodimer. Zn(2+) serves as cofactor. Expressed in the root tips. Expressed in the apical meristematic regions, leaf veins and at the base of the trichomes. Expressed at the base of the stems. Expressed in the abscission zones of newly formed siliques.

The catalysed reaction is (E)-cinnamyl alcohol + NADP(+) = (E)-cinnamaldehyde + NADPH + H(+). It catalyses the reaction (E)-coniferol + NADP(+) = (E)-coniferaldehyde + NADPH + H(+). The enzyme catalyses (E)-sinapyl alcohol + NADP(+) = (E)-sinapaldehyde + NADPH + H(+). It carries out the reaction (E)-4-coumaroyl alcohol + NADP(+) = (E)-4-coumaraldehyde + NADPH + H(+). The catalysed reaction is (E)-caffeyl alcohol + NADP(+) = (E)-caffeyl aldehyde + NADPH + H(+). It functions in the pathway aromatic compound metabolism; phenylpropanoid biosynthesis. Functionally, involved in lignin biosynthesis. Catalyzes the final step specific for the production of lignin monomers. Catalyzes the NADPH-dependent reduction of coniferaldehyde, 5-hydroxyconiferaldehyde, sinapaldehyde, 4-coumaraldehyde and caffeyl aldehyde to their respective alcohols. The protein is Cinnamyl alcohol dehydrogenase 3 of Arabidopsis thaliana (Mouse-ear cress).